The sequence spans 86 residues: Small ribosomal subunit protein bS16 (86 aa).

This sequence belongs to the bacterial ribosomal protein bS16 family.

The chain is Small ribosomal subunit protein bS16 from Nostoc punctiforme (strain ATCC 29133 / PCC 73102).